The sequence spans 314 residues: Glycerol-3-phosphate dehydrogenase [NAD(P)+] (314 aa).

NADPH contacts are provided by Phe-11, Arg-30, and Lys-96. Sn-glycerol 3-phosphate contacts are provided by Lys-96, Gly-124, and Ser-126. Ala-128 contacts NADPH. Positions 179, 232, 242, 243, and 244 each coordinate sn-glycerol 3-phosphate. The active-site Proton acceptor is the Lys-179. Arg-243 is a binding site for NADPH. Glu-264 contributes to the NADPH binding site.

Belongs to the NAD-dependent glycerol-3-phosphate dehydrogenase family.

Its subcellular location is the cytoplasm. It carries out the reaction sn-glycerol 3-phosphate + NAD(+) = dihydroxyacetone phosphate + NADH + H(+). It catalyses the reaction sn-glycerol 3-phosphate + NADP(+) = dihydroxyacetone phosphate + NADPH + H(+). It functions in the pathway membrane lipid metabolism; glycerophospholipid metabolism. Its function is as follows. Catalyzes the reduction of the glycolytic intermediate dihydroxyacetone phosphate (DHAP) to sn-glycerol 3-phosphate (G3P), the key precursor for phospholipid synthesis. In Paracoccus denitrificans (strain Pd 1222), this protein is Glycerol-3-phosphate dehydrogenase [NAD(P)+].